A 307-amino-acid polypeptide reads, in one-letter code: UDP-3-O-acyl-N-acetylglucosamine deacetylase (307 aa).

3 residues coordinate Zn(2+): His-78, His-241, and Asp-245. Residue His-268 is the Proton donor of the active site.

The protein belongs to the LpxC family. It depends on Zn(2+) as a cofactor.

It carries out the reaction a UDP-3-O-[(3R)-3-hydroxyacyl]-N-acetyl-alpha-D-glucosamine + H2O = a UDP-3-O-[(3R)-3-hydroxyacyl]-alpha-D-glucosamine + acetate. Its pathway is glycolipid biosynthesis; lipid IV(A) biosynthesis; lipid IV(A) from (3R)-3-hydroxytetradecanoyl-[acyl-carrier-protein] and UDP-N-acetyl-alpha-D-glucosamine: step 2/6. Functionally, catalyzes the hydrolysis of UDP-3-O-myristoyl-N-acetylglucosamine to form UDP-3-O-myristoylglucosamine and acetate, the committed step in lipid A biosynthesis. This Acidovorax ebreus (strain TPSY) (Diaphorobacter sp. (strain TPSY)) protein is UDP-3-O-acyl-N-acetylglucosamine deacetylase.